A 907-amino-acid chain; its full sequence is Coatomer subunit beta'-1 (907 aa).

WD repeat units follow at residues 13 to 52 (QRSERVKSVDLHPTEPWILSSLYSGSVCIWDYQSQTMVKS), 55 to 94 (VSELPVRSAKFISRKQWVVAGADDMFIRVYNYNTMDKVKV), 97 to 136 (AHTDYIRCVAVHPTLPYVLSSSDDMLIKLWDWDKGWMCTQ), 140 to 180 (GHSH…PNFT), 183 to 224 (GHQK…CVQT), 227 to 266 (GHTHNISAVCFHPELPIIITGSEDGTVRIWHSTTYRLENT), 269 to 309 (YGLE…ASMD), 351 to 389 (SCDLYPQSLKHNPNGRFVVVCGDGEFIIYTALAWRNRSF), and 461 to 501 (RIDV…SYLE). 2 stretches are compositionally biased toward acidic residues: residues 850 to 866 (ETEDALDENGEPDEEVL) and 874 to 887 (STDEAVEVDADEPE). The interval 850-887 (ETEDALDENGEPDEEVLEENKVEESTDEAVEVDADEPE) is disordered.

This sequence belongs to the WD repeat COPB2 family. Oligomeric complex that consists of at least the alpha, beta, beta', gamma, delta, epsilon and zeta subunits.

The protein localises to the cytoplasm. It is found in the golgi apparatus membrane. The protein resides in the cytoplasmic vesicle. It localises to the COPI-coated vesicle membrane. In terms of biological role, the coatomer is a cytosolic protein complex that binds to dilysine motifs and reversibly associates with Golgi non-clathrin-coated vesicles, which further mediate biosynthetic protein transport from the ER, via the Golgi up to the trans Golgi network. Coatomer complex is required for budding from Golgi membranes, and is essential for the retrograde Golgi-to-ER transport of dilysine-tagged proteins. This Oryza sativa subsp. japonica (Rice) protein is Coatomer subunit beta'-1.